Consider the following 176-residue polypeptide: Cell division control protein 31 (176 aa).

Residues 1–12 (MFANARAKRRSR) are compositionally biased toward basic residues. The tract at residues 1–21 (MFANARAKRRSRASSPTPARL) is disordered. EF-hand domains lie at 34-69 (EQRQDINEAFKLFDSDKDNAIDYHELRAAMRALGFN), 70-105 (AEKSEVLKILRDFDKTGKGYLQMEDFVRVMTEKIVE), 107-142 (DPLEEIKRAFELFDDDETGKISLRNLRRVAKELNEN), and 143-176 (IDDQELEAMIEEFDLDQDGEINEQEFIAIMMDEA). Aspartate 47, aspartate 49, aspartate 51, and glutamate 58 together coordinate Ca(2+). Ca(2+)-binding residues include aspartate 156, aspartate 158, aspartate 160, glutamate 162, and glutamate 167.

This sequence belongs to the centrin family. Component of the spindle pole body (SPB), acting as the connector of microtubule arrays in the cytoplasm and the nucleoplasm, is involved in nuclear positioning before chromosome segregation, SPB separation, spindle formation, chromosome segregation, nuclear migration into the bud, nuclear reorientation after cytokinesis and nuclear fusion during conjugation. The SPB half-bridge, which is tightly associated with the cytoplasmic side of the nuclear envelope and the SPB, is playing a key role as the starting structure for and in the initiation of SPB duplication in G1. Within the complex, interacts with sad1.

It localises to the nucleus. Its function is as follows. Required for the proper coordination between exit from mitosis and the initiation of septation. Has a role in bipolar spindle formation during spindle pole body (SPB) duplication. Required for the localization of sad1 to the SPB. The protein is Cell division control protein 31 (cdc31) of Schizosaccharomyces pombe (strain 972 / ATCC 24843) (Fission yeast).